The chain runs to 54 residues: U-reduvitoxin-Pr7a (54 aa).

The N-terminal stretch at 1–23 (MDFLRILLFVLACIMALFTSAIA) is a signal peptide. Disulfide bonds link Cys-26/Cys-41, Cys-33/Cys-46, and Cys-40/Cys-53.

Belongs to the venom Ptu1-like knottin family. In terms of tissue distribution, expressed by the venom gland.

It is found in the secreted. Binds reversibly and blocks P/Q-type voltage-gated calcium channels (Cav). The chain is U-reduvitoxin-Pr7a from Platymeris rhadamanthus (Red spot assassin bug).